The following is a 177-amino-acid chain: Large ribosomal subunit protein uL6 (177 aa).

The protein belongs to the universal ribosomal protein uL6 family. In terms of assembly, part of the 50S ribosomal subunit.

Functionally, this protein binds to the 23S rRNA, and is important in its secondary structure. It is located near the subunit interface in the base of the L7/L12 stalk, and near the tRNA binding site of the peptidyltransferase center. The sequence is that of Large ribosomal subunit protein uL6 from Paracidovorax citrulli (strain AAC00-1) (Acidovorax citrulli).